The primary structure comprises 599 residues: Elongation factor 4 (599 aa).

In terms of domain architecture, tr-type G spans 2-184 (KHIRNFSIIA…RLVRDIPPPE (183 aa)). GTP contacts are provided by residues 14–19 (DHGKST) and 131–134 (NKID).

It belongs to the TRAFAC class translation factor GTPase superfamily. Classic translation factor GTPase family. LepA subfamily.

It is found in the cell inner membrane. The enzyme catalyses GTP + H2O = GDP + phosphate + H(+). Required for accurate and efficient protein synthesis under certain stress conditions. May act as a fidelity factor of the translation reaction, by catalyzing a one-codon backward translocation of tRNAs on improperly translocated ribosomes. Back-translocation proceeds from a post-translocation (POST) complex to a pre-translocation (PRE) complex, thus giving elongation factor G a second chance to translocate the tRNAs correctly. Binds to ribosomes in a GTP-dependent manner. The chain is Elongation factor 4 from Pectobacterium carotovorum subsp. carotovorum (strain PC1).